Reading from the N-terminus, the 364-residue chain is Histidinol-phosphate aminotransferase (364 aa).

Residue lysine 226 is modified to N6-(pyridoxal phosphate)lysine.

Belongs to the class-II pyridoxal-phosphate-dependent aminotransferase family. Histidinol-phosphate aminotransferase subfamily. In terms of assembly, homodimer. Pyridoxal 5'-phosphate is required as a cofactor.

It catalyses the reaction L-histidinol phosphate + 2-oxoglutarate = 3-(imidazol-4-yl)-2-oxopropyl phosphate + L-glutamate. It functions in the pathway amino-acid biosynthesis; L-histidine biosynthesis; L-histidine from 5-phospho-alpha-D-ribose 1-diphosphate: step 7/9. The protein is Histidinol-phosphate aminotransferase of Campylobacter jejuni subsp. jejuni serotype O:23/36 (strain 81-176).